A 557-amino-acid polypeptide reads, in one-letter code: Inositol-3-phosphate synthase 1 (557 aa).

The NAD(+) site is built by Gly-67, Gly-68, Asn-69, Asn-70, Asp-141, Ser-177, Val-178, Gln-188, Arg-191, Thr-228, Ala-229, Asn-230, Thr-231, Gly-278, Ser-279, Asp-303, Ser-306, Asn-337, Asn-338, Asp-339, and Lys-352. Ser-279 carries the post-translational modification Phosphoserine. Ser-357 carries the post-translational modification Phosphoserine. NAD(+)-binding residues include Gly-390, Asp-391, Asp-419, and Ser-420. Position 523 is a phosphoserine (Ser-523). The interval 527 to 557 is disordered; it reads CKKGSAPTAPNGCTGDANGHSQAEAPQMPTT.

Belongs to the myo-inositol 1-phosphate synthase family. It depends on NAD(+) as a cofactor. Expressed in testis (at protein level).

The protein localises to the cytoplasm. It catalyses the reaction D-glucose 6-phosphate = 1D-myo-inositol 3-phosphate. Its pathway is polyol metabolism; myo-inositol biosynthesis; myo-inositol from D-glucose 6-phosphate: step 1/2. Key enzyme in myo-inositol biosynthesis pathway that catalyzes the conversion of glucose 6-phosphate to 1-myo-inositol 1-phosphate in a NAD-dependent manner. Rate-limiting enzyme in the synthesis of all inositol-containing compounds. This Bos taurus (Bovine) protein is Inositol-3-phosphate synthase 1 (ISYNA1).